Reading from the N-terminus, the 199-residue chain is NAD(P)H dehydrogenase (quinone) (199 aa).

In terms of domain architecture, Flavodoxin-like spans 4–190 (VLVLYYSAYG…AGARYQGKTI (187 aa)). Residues 10 to 15 (SAYGHI) and 78 to 80 (TRF) each bind FMN. Tyr12 contributes to the NAD(+) binding site. Trp98 is a substrate binding site. FMN contacts are provided by residues 113-119 (STATQHG) and His134.

The protein belongs to the WrbA family. FMN serves as cofactor.

The catalysed reaction is a quinone + NADH + H(+) = a quinol + NAD(+). The enzyme catalyses a quinone + NADPH + H(+) = a quinol + NADP(+). In Rhodopseudomonas palustris (strain HaA2), this protein is NAD(P)H dehydrogenase (quinone).